The primary structure comprises 142 residues: Large ribosomal subunit protein uL11 (142 aa).

The protein belongs to the universal ribosomal protein uL11 family. Part of the ribosomal stalk of the 50S ribosomal subunit. Interacts with L10 and the large rRNA to form the base of the stalk. L10 forms an elongated spine to which L12 dimers bind in a sequential fashion forming a multimeric L10(L12)X complex. In terms of processing, one or more lysine residues are methylated.

Forms part of the ribosomal stalk which helps the ribosome interact with GTP-bound translation factors. The chain is Large ribosomal subunit protein uL11 from Mycobacteroides abscessus (strain ATCC 19977 / DSM 44196 / CCUG 20993 / CIP 104536 / JCM 13569 / NCTC 13031 / TMC 1543 / L948) (Mycobacterium abscessus).